The following is a 224-amino-acid chain: UPF0758 protein Noc_0236 (224 aa).

Residues 102–224 form the MPN domain; the sequence is VLTDPQTTQR…TLSFAERGLL (123 aa). His173, His175, and Asp186 together coordinate Zn(2+). The short motif at 173–186 is the JAMM motif element; sequence HNHPSGVAEPSRAD.

This sequence belongs to the UPF0758 family.

This is UPF0758 protein Noc_0236 from Nitrosococcus oceani (strain ATCC 19707 / BCRC 17464 / JCM 30415 / NCIMB 11848 / C-107).